A 110-amino-acid polypeptide reads, in one-letter code: uncharacterized protein (110 aa).

The chain crosses the membrane as a helical span at residues 18–34 (MFPLISTFTSIGLGVLM).

The protein resides in the membrane. This is an uncharacterized protein from Saccharomyces cerevisiae (strain ATCC 204508 / S288c) (Baker's yeast).